The primary structure comprises 423 residues: Adenylosuccinate synthetase (423 aa).

GTP is bound by residues 12–18 (GDEGKGK) and 40–42 (GHT). Catalysis depends on D13, which acts as the Proton acceptor. 2 residues coordinate Mg(2+): D13 and G40. Residues 13 to 16 (DEGK), 38 to 41 (NAGH), T128, R142, Q223, T238, and R302 contribute to the IMP site. Catalysis depends on H41, which acts as the Proton donor. 298 to 304 (TTTGRPR) contributes to the substrate binding site. GTP is bound by residues R304, 330–332 (RLD), and 412–414 (CIG).

It belongs to the adenylosuccinate synthetase family. In terms of assembly, homodimer. Mg(2+) is required as a cofactor.

It is found in the cytoplasm. It carries out the reaction IMP + L-aspartate + GTP = N(6)-(1,2-dicarboxyethyl)-AMP + GDP + phosphate + 2 H(+). It participates in purine metabolism; AMP biosynthesis via de novo pathway; AMP from IMP: step 1/2. In terms of biological role, plays an important role in the de novo pathway of purine nucleotide biosynthesis. Catalyzes the first committed step in the biosynthesis of AMP from IMP. The sequence is that of Adenylosuccinate synthetase from Dehalococcoides mccartyi (strain ATCC BAA-2100 / JCM 16839 / KCTC 5957 / BAV1).